Consider the following 323-residue polypeptide: Protease Do-like 5, chloroplastic (323 aa).

The transit peptide at 1 to 28 (MTMALASSKAFSSIFNTLSPINQSKFVL) directs the protein to the chloroplast. The N-terminal 45 residues, 29 to 73 (ACSGSNHVDVIDRRRRIMIFGSSLALTSSLLGSNQQRLPMESAIA), are a transit peptide targeting the thylakoid. Active-site charge relay system residues include His147, Asp188, and Ser266. The interval 186-283 (DNDLAVLKIE…YGHTIGVNTA (98 aa)) is serine protease.

Belongs to the peptidase S1C family.

It localises to the plastid. The protein localises to the chloroplast thylakoid lumen. Probable serine protease. The sequence is that of Protease Do-like 5, chloroplastic (DEGP5) from Arabidopsis thaliana (Mouse-ear cress).